A 568-amino-acid chain; its full sequence is Putative F-box protein At5g39480 (568 aa).

An F-box domain is found at 9–55 (ACLLLTLPEDVFAVISRFLSPSDICNLILCGKSLPALVDTEKMWLVQ). The tract at residues 315-337 (TNVLGESSSSKNTTPSQSEIRVS) is disordered. Over residues 321 to 332 (SSSSKNTTPSQS) the composition is skewed to low complexity.

This is Putative F-box protein At5g39480 from Arabidopsis thaliana (Mouse-ear cress).